Consider the following 173-residue polypeptide: Mitochondrial holo-[acyl-carrier-protein] synthase (173 aa).

The protein belongs to the P-Pant transferase superfamily. AcpS family.

It localises to the mitochondrion. The enzyme catalyses apo-[ACP] + CoA = holo-[ACP] + adenosine 3',5'-bisphosphate + H(+). Functionally, transfers the 4'-phosphopantetheine moiety from coenzyme A to a Ser of mitochondrial acyl-carrier-protein. The sequence is that of Mitochondrial holo-[acyl-carrier-protein] synthase (PPT2) from Saccharomyces cerevisiae (strain ATCC 204508 / S288c) (Baker's yeast).